We begin with the raw amino-acid sequence, 238 residues long: Ribonuclease 3 (238 aa).

The RNase III domain occupies 17 to 140 (YATLEKALGY…LMAGVYLEAG (124 aa)). E53 is a binding site for Mg(2+). Residue D57 is part of the active site. Mg(2+) is bound by residues S126 and E129. The active site involves E129. The 70-residue stretch at 167–236 (DYKTALQELT…AYQALQKLKE (70 aa)) folds into the DRBM domain.

This sequence belongs to the ribonuclease III family. As to quaternary structure, homodimer. The cofactor is Mg(2+).

It is found in the cytoplasm. The catalysed reaction is Endonucleolytic cleavage to 5'-phosphomonoester.. Its function is as follows. Digests double-stranded RNA. Involved in the processing of primary rRNA transcript to yield the immediate precursors to the large and small rRNAs (23S and 16S). Processes some mRNAs, and tRNAs when they are encoded in the rRNA operon. Processes pre-crRNA and tracrRNA of type II CRISPR loci if present in the organism. This is Ribonuclease 3 from Helicobacter pylori (strain Shi470).